Reading from the N-terminus, the 2774-residue chain is Microtubule-associated protein 1A (2774 aa).

A phosphoserine mark is found at serine 114, serine 117, serine 118, serine 121, and serine 155. Position 177 is a phosphotyrosine (tyrosine 177). The disordered stretch occupies residues 310-329 (PSKIKHRADSKESLKAAPKT). Residues serine 319 and serine 322 each carry the phosphoserine modification. Repeat 1 spans residues 336–338 (KRE). Residues 336–541 (KREEVLEEGA…TQDFEELKRE (206 aa)) are 11 X 3 AA repeats of K-K-[DE]. Residues 342-390 (EEGAKEARSELAKELAKTEKKAKEPSEKPPEKPSKSERVRGESSEALKA) show a composition bias toward basic and acidic residues. 9 disordered regions span residues 342–718 (EEGA…SFLS), 737–808 (TIPG…TELT), 845–939 (EDQS…VGKE), 957–1078 (FGAP…QTGC), 1093–1344 (ETGE…ILPE), 1357–1646 (QKDG…SPEQ), 1693–1725 (ESTFLDEGPDEQEITPLQHTPRSPWTSDFKDFQ), 1739–1843 (LAES…VPFS), and 1861–2644 (AELE…LVNG). A Phosphoserine modification is found at serine 384. The span at 391 to 406 (EKRRLIKDKAGKKHLK) shows a compositional bias: basic residues. Composition is skewed to basic and acidic residues over residues 407–464 (EKIS…KPDL) and 484–500 (VKVDKGRAARGEKELSS). 9 tandem repeats follow at residues 415-417 (KKD), 420-422 (KKE), 424-426 (KKE), 427-429 (RKE), 431-433 (KKE), 436-438 (RKE), 440-442 (KKD), 444-446 (KKD), and 449-451 (RKD). Threonine 504 is subject to Phosphothreonine. The segment covering 506–516 (PAQKGAAPPAA) has biased composition (low complexity). Residues serine 526 and serine 527 each carry the phosphoserine modification. Composition is skewed to basic and acidic residues over residues 536–554 (EELKREERGLLAEQRDTGL) and 584–595 (EGEHVEREKEVV). Residues 539 to 541 (KRE) form repeat 11. 2 positions are modified to phosphoserine: serine 604 and serine 611. Composition is skewed to basic and acidic residues over residues 614-631 (EVEKEKETWEERKQREAE) and 638-675 (AAREESEAEVKEDVIEKAELEEMEETHPSDEEGEETKA). Serine 643 carries the post-translational modification Phosphoserine. Phosphothreonine is present on threonine 663. Residues serine 666, serine 677, serine 690, and serine 785 each carry the phosphoserine modification. Polar residues-rich tracts occupy residues 845 to 858 (EDQSVASLTAPQTE) and 869 to 881 (TVTSIPSSRTEAT). Residues serine 872, serine 875, serine 876, and serine 889 each carry the phosphoserine modification. At threonine 892 the chain carries Phosphothreonine. Phosphoserine occurs at positions 894, 898, 907, 980, 990, 998, 1007, 1013, 1022, 1029, 1037, 1061, 1132, 1134, 1148, 1160, 1178, 1188, 1191, 1197, 1206, and 1209. The span at 1008 to 1028 (PVEDKSEPRDFQEDSWGETKH) shows a compositional bias: basic and acidic residues. Residues 1142 to 1157 (SVLSVVSPDTTKQEAT) are compositionally biased toward polar residues. Positions 1180-1190 (EDTQSLSFSEE) are enriched in polar residues. Residues 1198–1212 (LDISSKQLSPESLGT) are compositionally biased toward polar residues. The span at 1220-1236 (LGKEERGPVMKAEDDSC) shows a compositional bias: basic and acidic residues. Phosphoserine is present on residues serine 1252, serine 1280, serine 1301, serine 1304, and serine 1307. Low complexity predominate over residues 1293–1308 (TSDSSLTKSPESLSSP). 5 stretches are compositionally biased toward basic and acidic residues: residues 1317-1336 (WEGKAPGKEKEPELKSETRQ), 1357-1409 (QKDG…EDQG), 1416-1428 (AEKDKASEQRDTD), 1436-1479 (EPRD…EHSI), and 1487-1574 (RAPD…KADS). Serine 1504, serine 1568, serine 1574, and serine 1594 each carry phosphoserine. The span at 1599-1613 (SKAREQEKKYWKEQD) shows a compositional bias: basic and acidic residues. Residues serine 1622, serine 1643, serine 1715, serine 1742, serine 1757, serine 1763, and serine 1767 each carry the phosphoserine modification. The span at 1707–1718 (TPLQHTPRSPWT) shows a compositional bias: polar residues. The residue at position 1772 (threonine 1772) is a Phosphothreonine. 2 positions are modified to phosphoserine: serine 1778 and serine 1784. A compositionally biased stretch (polar residues) spans 1789-1803 (TESTAPMRNEPTTPS). Residues 1818 to 1839 (LPPAPLSPAPAPPTPAPEPHTP) show a composition bias toward pro residues. Over residues 1873 to 1885 (KDYRKAEGEREGE) the composition is skewed to basic and acidic residues. Serine 1897 carries the post-translational modification Phosphoserine. Residues 1908–1930 (ATRDTEQTEPEQREPTPYPDERS) show a composition bias toward basic and acidic residues. The residue at position 1923 (threonine 1923) is a Phosphothreonine. The span at 1984–1997 (SSPASPQNLQSDTP) shows a compositional bias: polar residues. Serine 1988 is subject to Phosphoserine. Positions 2008–2034 (AVPPRQEPDPGPNVEPSITPPAVPPRA) are enriched in pro residues. Threonine 2026 carries the phosphothreonine modification. A phosphoserine mark is found at serine 2043 and serine 2077. Positions 2055–2092 (PDRRTPSPKETGRGHWDDGTNDSDLEKGAREQPEKETR) are enriched in basic and acidic residues. Low complexity predominate over residues 2115 to 2125 (SSLSSDSHLGS). Pro residues predominate over residues 2144–2153 (PAPPQLPSPA). Serine 2204, serine 2221, serine 2225, serine 2228, serine 2229, and serine 2260 each carry phosphoserine. The segment covering 2226-2237 (EGSSSEATTPVI) has biased composition (polar residues). Over residues 2271 to 2287 (DLTPLSPAPSASLDLAP) the composition is skewed to low complexity. Residues 2288-2298 (APAPAPAPAPG) are compositionally biased toward pro residues. The span at 2299-2309 (LPGDLGDGTLP) shows a compositional bias: low complexity. Residues 2352-2364 (AEKEEAEAPHAWE) show a composition bias toward basic and acidic residues. Serine 2424 carries the post-translational modification Phosphoserine. Low complexity predominate over residues 2477–2489 (SASDSGSSQSDSD). Positions 2534-2550 (DPPPTPLPDPRPSPPRP) are enriched in pro residues. Basic and acidic residues predominate over residues 2565 to 2575 (GRVERLREKGR). Over residues 2613–2623 (RTVPRPRSTPS) the composition is skewed to low complexity. Serine 2620 and serine 2635 each carry phosphoserine.

The protein belongs to the MAP1 family. As to quaternary structure, 3 different light chains, LC1 (a cleavage product of MAP1B), LC2 (a cleavage product of MAP1A) and LC3 (produced by one of the MAP1LC3 genes), can associate with the MAP1A or MAP1B heavy chains. Interacts with guanylate kinase-like domain of DLG1, DLG2 and DLG4. Binds to CSNK1D. Interacts with TIAM2. Interacts with ELAVL4. Post-translationally, phosphorylated by CSNK1D. In terms of processing, LC2 is generated from MAP1A by proteolytic processing. It is free to associate with both MAP1A and MAP1B. In terms of tissue distribution, brain, heart and muscle.

Its subcellular location is the cytoplasm. The protein localises to the cytoskeleton. Its function is as follows. Structural protein involved in the filamentous cross-bridging between microtubules and other skeletal elements. The sequence is that of Microtubule-associated protein 1A (Map1a) from Rattus norvegicus (Rat).